The primary structure comprises 259 residues: Thiazole synthase (259 aa).

Lysine 95 serves as the catalytic Schiff-base intermediate with DXP. 1-deoxy-D-xylulose 5-phosphate is bound by residues glycine 156, alanine 182 to glycine 183, and alanine 204 to serine 205.

Belongs to the ThiG family. In terms of assembly, homotetramer. Forms heterodimers with either ThiH or ThiS.

The protein localises to the cytoplasm. It catalyses the reaction [ThiS sulfur-carrier protein]-C-terminal-Gly-aminoethanethioate + 2-iminoacetate + 1-deoxy-D-xylulose 5-phosphate = [ThiS sulfur-carrier protein]-C-terminal Gly-Gly + 2-[(2R,5Z)-2-carboxy-4-methylthiazol-5(2H)-ylidene]ethyl phosphate + 2 H2O + H(+). The protein operates within cofactor biosynthesis; thiamine diphosphate biosynthesis. Its function is as follows. Catalyzes the rearrangement of 1-deoxy-D-xylulose 5-phosphate (DXP) to produce the thiazole phosphate moiety of thiamine. Sulfur is provided by the thiocarboxylate moiety of the carrier protein ThiS. In vitro, sulfur can be provided by H(2)S. The polypeptide is Thiazole synthase (Corynebacterium aurimucosum (strain ATCC 700975 / DSM 44827 / CIP 107346 / CN-1) (Corynebacterium nigricans)).